Reading from the N-terminus, the 698-residue chain is Protein let-99 (698 aa).

One can recognise a DEP domain in the interval 23–107 (FRSNLSLKTN…SESRIYLFMK (85 aa)). Disordered stretches follow at residues 115–188 (PKPR…DDEI) and 653–672 (ITRS…QASP). Residues 146-157 (RPPKARLPRRLS) show a composition bias toward basic residues. A compositionally biased stretch (basic and acidic residues) spans 178–188 (HGFDDHKDDEI).

Its subcellular location is the cytoplasm. It is found in the cell cortex. Functionally, required for the proper orientation of spindles after the establishment of polarity. May play a role in interactions between the astral microtubules and the cortical cytoskeleton. Required for asymmetric forces on nuclei and spindles. Acts downstream of the PAR signaling as an intermediate that transduces polarity information to the machinery that positions the mitotic spindle, possibly by regulating force generation. Regulates gpr-1/2 asymmetric cortical localization during the first embryonic cell divisions. Acts antagonistically to the gpr-1/2 signaling pathway. Regulates mes-1 expression and/or localization pattern during early embryogenesis. The chain is Protein let-99 (let-99) from Caenorhabditis elegans.